Reading from the N-terminus, the 131-residue chain is Holo-[acyl-carrier-protein] synthase (131 aa).

Mg(2+)-binding residues include Asp8 and Glu58.

It belongs to the P-Pant transferase superfamily. AcpS family. Mg(2+) serves as cofactor.

It localises to the cytoplasm. The catalysed reaction is apo-[ACP] + CoA = holo-[ACP] + adenosine 3',5'-bisphosphate + H(+). In terms of biological role, transfers the 4'-phosphopantetheine moiety from coenzyme A to a Ser of acyl-carrier-protein. The polypeptide is Holo-[acyl-carrier-protein] synthase (Oenococcus oeni (strain ATCC BAA-331 / PSU-1)).